Reading from the N-terminus, the 100-residue chain is NADH-quinone oxidoreductase subunit K (100 aa).

A run of 3 helical transmembrane segments spans residues 2–22, 28–48, and 63–83; these read VTLN…LVGV, LLML…GLVA, and FFII…LILW.

The protein belongs to the complex I subunit 4L family. As to quaternary structure, NDH-1 is composed of 14 different subunits. Subunits NuoA, H, J, K, L, M, N constitute the membrane sector of the complex.

It localises to the cell inner membrane. It catalyses the reaction a quinone + NADH + 5 H(+)(in) = a quinol + NAD(+) + 4 H(+)(out). Its function is as follows. NDH-1 shuttles electrons from NADH, via FMN and iron-sulfur (Fe-S) centers, to quinones in the respiratory chain. The immediate electron acceptor for the enzyme in this species is believed to be ubiquinone. Couples the redox reaction to proton translocation (for every two electrons transferred, four hydrogen ions are translocated across the cytoplasmic membrane), and thus conserves the redox energy in a proton gradient. In Wolinella succinogenes (strain ATCC 29543 / DSM 1740 / CCUG 13145 / JCM 31913 / LMG 7466 / NCTC 11488 / FDC 602W) (Vibrio succinogenes), this protein is NADH-quinone oxidoreductase subunit K.